A 76-amino-acid chain; its full sequence is Putative UPF0377 protein YGL260W (76 aa).

Belongs to the UPF0377 family.

This Saccharomyces cerevisiae (strain ATCC 204508 / S288c) (Baker's yeast) protein is Putative UPF0377 protein YGL260W.